The chain runs to 863 residues: Importin subunit beta-1 (863 aa).

19 HEAT repeats span residues 2-31 (NAGEFLAQTLSPDANVRLNAEKQLENAART), 33-62 (FAQYMVLLAQELANDNSMPYIRMAAGLALK), 85-124 (VEIKQQVKSLALQTLGSSEHQAGQSAAQLVAAIAAYELAT), 129-159 (DLMVTLVANVGEGQPSALKQHSLQTIGYICE), 170-201 (SNAILTAVVAGARKEEPDAAVRLAALGALYDS), 212-248 (EYERNYIMQVVCEATQSPEASIQTAAFGCLVKIMHLY), 253-299 (PFYM…EIQE), 314-360 (FARA…QVVG), 364-392 (VNPVLAFVEQNIQNPDWHQREAAVMAFGS), 399-439 (VAML…SSFV), 449-481 (LSPMVSALLQGLTDNPRIVANCCWAFMNLVCHF), 496-530 (YEAIIGSLLHVTDQKGNENNSRTSGYETLGTLITF), 536-586 (LPMI…IIRR), 592-630 (RTSSDQIMNLLLQTMQTAPKQSVVHEDVLLAIGAMMNSL), 635-671 (EVYVPSFVPFLSSALSNEQEYQLCSVAVGLVGDLARA), 677-715 (LPYCDDFMTRLVQDLQSSVLDRNVKPAILSCFSDIALAI), 720-767 (QTYL…ITQA), 778-815 (QPYVHSMFTLLNMITADPECSESLTRAALGLLGDLAES), and 822-861 (KSYFAADWVAALLNSGKTKISSQQTKDLARWATEQVKRQA). The 81-residue stretch at 21 to 101 (AEKQLENAAR…KSLALQTLGS (81 aa)) folds into the Importin N-terminal domain.

Belongs to the importin beta family. Importin beta-1 subfamily. As to quaternary structure, forms a complex with an importin alpha subunit. Interacts with Ran; interacts specifically with the GTP-bound form of Ran (GTP-Ran), protecting it from GTP hydrolysis and nucleotide exchange. Interacts with nucleoporins.

Its subcellular location is the cytoplasm. It localises to the nucleus envelope. The protein localises to the nucleus. The protein resides in the nuclear pore complex. Importin beta subunit that functions in nuclear protein import through association with the importin alpha subunit, which binds to the clasical nuclear localization signal (cNLS) in cargo substrates. Docking of the importin/substrate complex to the nuclear pore complex (NPC) is mediated by importin beta through binding to nucleoporin FxFG repeats and the complex is subsequently translocated through the pore by an energy requiring, Ran-dependent mechanism. At the nucleoplasmic side of the NPC, GTP-Ran binds to importin beta and the three components separate, leading to release of the cargo. Importin alpha and beta are re-exported from the nucleus to the cytoplasm where GTP hydrolysis releases Ran from importin beta. The directionality of nuclear import is thought to be conferred by an asymmetric distribution of the GTP- and GDP-bound forms of Ran between the cytoplasm and nucleus. This is Importin subunit beta-1 from Schizosaccharomyces pombe (strain 972 / ATCC 24843) (Fission yeast).